We begin with the raw amino-acid sequence, 330 residues long: Short chain dehydrogenase macD (330 aa).

NADP(+) is bound by residues lysine 57, aspartate 86, asparagine 113, tyrosine 204, and lysine 208. The Proton donor role is filled by tyrosine 204. Lysine 208 serves as the catalytic Lowers pKa of active site Tyr.

The protein belongs to the short-chain dehydrogenases/reductases (SDR) family.

It functions in the pathway secondary metabolite biosynthesis; terpenoid biosynthesis. Functionally, short chain dehydrogenase; part of the gene cluster that mediates the biosynthesis of macrophorins, isoprenoid epoxycyclohexenones containing cyclized drimane moieties. The first step of the pathway is the synthesis of 6-methylsalicylic acid (6-MSA) by the polyketide synthase macA. 6-MSA is then converted to m-cresol by the decarboxylase macB. The cytochrome P450 monooxygenase macC then catalyzes the oxidation of m-cresol to toluquinol. Epoxidation of toluquinol is then performed by the short chain dehydrogenase macD, with the help of macE, and a further prenylation by macG leads to 7-deacetoxyyanuthone A. The next step is the hydroxylation of C-22 of 7-deacetoxyyanuthone A by the cytochrome P450 monooxygenase macH to yield 22-deacetylyanuthone A. O-Mevalon transferase macI then attaches mevalon to the hydroxyl group of 22-deacetylyanuthone A to produce yanuthone E. The terpene cyclase macJ catalyzes the cyclization of 22-deacetylyanuthone A to macrophorin A. MacJ is also able to catalyze cyclization of yanuthone E and 7-deacetoxyyanuthone A to their corresponding macrophorins. The macJ products can be further modified by macH and macJ, as well as by the FAD-dependent monooxygenase macF, to produce additional macrophorins, including 4'-oxomacrophorin A, 4'-oxomacrophorin D and 4'-oxomacrophorin E. In Penicillium terrestre, this protein is Short chain dehydrogenase macD.